The primary structure comprises 276 residues: Omega-amidase NIT2 (276 aa).

The CN hydrolase domain occupies 4–248 (FRLALIQLQI…EAIVYSDIDL (245 aa)). Ser26 is modified (phosphoserine). The Proton acceptor role is filled by Glu43. N6-acetyllysine; alternate is present on Lys68. Lys68 bears the N6-succinyllysine; alternate mark. Lys112 (proton donor) is an active-site residue. Lys123 and Lys130 each carry N6-succinyllysine. The active-site Nucleophile is Cys153.

As to quaternary structure, homodimer. Detected in fetal brain (at protein level). Ubiquitous. Detected in heart, brain, placenta, lung, liver, skeletal muscle, kidney, pancreas, prostate, spleen, thymus, prostate, testis, ovary, small intestine and colon.

The protein localises to the cytoplasm. It carries out the reaction a monoamide of a dicarboxylate + H2O = a dicarboxylate + NH4(+). It catalyses the reaction 2-oxoglutaramate + H2O = 2-oxoglutarate + NH4(+). The enzyme catalyses 2-oxosuccinamate + H2O = oxaloacetate + NH4(+). In terms of biological role, has omega-amidase activity. The role of omega-amidase is to remove potentially toxic intermediates by converting 2-oxoglutaramate and 2-oxosuccinamate to biologically useful 2-oxoglutarate and oxaloacetate, respectively. The sequence is that of Omega-amidase NIT2 (NIT2) from Homo sapiens (Human).